We begin with the raw amino-acid sequence, 252 residues long: Phosphoglycolate phosphatase (252 aa).

Asp-13 (nucleophile) is an active-site residue. Mg(2+) is bound by residues Asp-13, Asp-15, and Asp-192.

The protein belongs to the HAD-like hydrolase superfamily. CbbY/CbbZ/Gph/YieH family. As to quaternary structure, monomer. The cofactor is Mg(2+). Chloride serves as cofactor.

The catalysed reaction is 2-phosphoglycolate + H2O = glycolate + phosphate. Its pathway is organic acid metabolism; glycolate biosynthesis; glycolate from 2-phosphoglycolate: step 1/1. Functionally, specifically catalyzes the dephosphorylation of 2-phosphoglycolate. Is involved in the dissimilation of the intracellular 2-phosphoglycolate formed during the DNA repair of 3'-phosphoglycolate ends, a major class of DNA lesions induced by oxidative stress. In Salmonella choleraesuis (strain SC-B67), this protein is Phosphoglycolate phosphatase.